Consider the following 569-residue polypeptide: Dolichol kinase EVAN (569 aa).

Residues Met1–Arg22 lie on the Cytoplasmic side of the membrane. The helical transmembrane segment at Ile23 to Leu43 threads the bilayer. Over Ser44 to Gly67 the chain is Lumenal. The chain crosses the membrane as a helical span at residues Ala68–Val88. Residues Gln89–Thr108 lie on the Cytoplasmic side of the membrane. Residues Met109 to Met129 form a helical membrane-spanning segment. Residues Ser130 to Arg147 lie on the Lumenal side of the membrane. The chain crosses the membrane as a helical span at residues Val148–Ser168. Topologically, residues His169–Met178 are cytoplasmic. The chain crosses the membrane as a helical span at residues Leu179–Phe199. Over Pro200–Glu207 the chain is Lumenal. Residues Ala208–Ala228 form a helical membrane-spanning segment. Over Lys229–Gly252 the chain is Cytoplasmic. A helical membrane pass occupies residues Ile253 to Leu273. The Lumenal portion of the chain corresponds to His274–Ser296. N-linked (GlcNAc...) asparagine glycosylation is present at Asn289. The helical transmembrane segment at Val297–Phe317 threads the bilayer. At Val318–Arg340 the chain is on the cytoplasmic side. The chain crosses the membrane as a helical span at residues Leu341 to Ile361. The Lumenal portion of the chain corresponds to Ser362–Arg369. The helical transmembrane segment at Ile370–Leu390 threads the bilayer. Residues Gln391 to Lys393 lie on the Cytoplasmic side of the membrane. The helical transmembrane segment at Phe394–Ile414 threads the bilayer. The Lumenal segment spans residues Trp415–Leu440. A helical transmembrane segment spans residues Ile441–Phe461. Residues Asn462 to Arg464 lie on the Cytoplasmic side of the membrane. Residues Ala465–Val485 form a helical membrane-spanning segment. At Gly486–Gly508 the chain is on the lumenal side. Residues His487–Glu503 are CTP-binding. Residues Ile509 to Ile529 traverse the membrane as a helical segment. Residues Leu530–Glu548 are Cytoplasmic-facing. A helical membrane pass occupies residues Ala549–Leu569.

Belongs to the polyprenol kinase family.

Its subcellular location is the endoplasmic reticulum membrane. It carries out the reaction a di-trans,poly-cis-dolichol + CTP = a di-trans,poly-cis-dolichyl phosphate + CDP + H(+). Essential for pollen development. Involved in protein N-glycosylation in the endoplasmic reticulum (ER), especially in the female gametophyte. Mediates pollen tube (PT) reception in synergids through protein glycosylation. The protein is Dolichol kinase EVAN of Arabidopsis thaliana (Mouse-ear cress).